We begin with the raw amino-acid sequence, 351 residues long: Nicotinate-nucleotide--dimethylbenzimidazole phosphoribosyltransferase (351 aa).

E318 acts as the Proton acceptor in catalysis.

The protein belongs to the CobT family.

It catalyses the reaction 5,6-dimethylbenzimidazole + nicotinate beta-D-ribonucleotide = alpha-ribazole 5'-phosphate + nicotinate + H(+). It participates in nucleoside biosynthesis; alpha-ribazole biosynthesis; alpha-ribazole from 5,6-dimethylbenzimidazole: step 1/2. Catalyzes the synthesis of alpha-ribazole-5'-phosphate from nicotinate mononucleotide (NAMN) and 5,6-dimethylbenzimidazole (DMB). In Chloroflexus aurantiacus (strain ATCC 29366 / DSM 635 / J-10-fl), this protein is Nicotinate-nucleotide--dimethylbenzimidazole phosphoribosyltransferase.